Reading from the N-terminus, the 808-residue chain is MVKFMKIKSIAAKNLLSFDDFKITFEDGDVVTIFGPNNVGKTNLFRVLKLLRNIINEKISAVDLEIYLHNKNLKAAKIEVDVIFDKSDKEVIAKFLKIFFKINAPDLIRLCNNLKLNIINSIIDYFSAGSYIWECSELRCYRPYFMLRLRSLEEDIEKIKIYLKERELSEITPDLIDHSKVIHELDRNVEIIEVTNDLKNIITSSVNALITIYEKNEKLFFSTLIDGKENITTRIGDGNIENIVEISMKDFTKDIEKYEDCFKRLTMDKNILRAFVVLLALDKLLANKMSIYVKKVLEYSKENPWDKEIIEDLKYIVRFCGFDYRDIYEISDISLNDILLKIYENSLIFYEDYLPNEGKVMIPDYMIVELLAGLKNNSLEKNVKSKILELFKTSTTKDDLYLGILSMPSEKWIPSYLFYLKNNANLKLRKRYMKIKEMFEYIFNSGSLSFDVILANNKPDIVVYSEDIEIPLNMVGLGVKKILEILTLVFGYESKVILLDTPFNQLYPKYQKRFSKILKDTENIDSQVFIILHSPYFINNENIFNTFRFYKPKKSTKYICIGSIIKDLEKTFGTVILDRTTRKILLSDAVILLSSALRDIPLFDLAEYEDIPIDEYNIEVIRPQNTLSFGKYYALLQYTSIPYILMLRSWILYNLYEEIKDGEGKVRYKLLEKGKYHKIVEERLNFFKNRHPFWISKEEFDKVINIYIKTLEAHREKLIELGYIYLSSKEEVVKYCIEPLRKQLEDILRKKLFIFTVPTDFIIEPQDLKNIQIEKDKYIVHNYIGYRKDVLKEFKEFFDYFVKFHNLQ.

Position 35-42 (35-42 (GPNNVGKT)) interacts with ATP.

This is an uncharacterized protein from Methanocaldococcus jannaschii (strain ATCC 43067 / DSM 2661 / JAL-1 / JCM 10045 / NBRC 100440) (Methanococcus jannaschii).